The following is a 318-amino-acid chain: Ribose-phosphate pyrophosphokinase 2 (318 aa).

96 to 101 (RQDKKD) contributes to the ATP binding site. Residues Asp-128, His-130, Asp-139, and Asp-143 each coordinate Mg(2+). His-130 provides a ligand contact to ATP. A binding of phosphoribosylpyrophosphate region spans residues 212-227 (KDRVAILVDDMADTCG).

Belongs to the ribose-phosphate pyrophosphokinase family. In terms of assembly, homodimer. The active form is probably a hexamer composed of 3 homodimers. Mg(2+) is required as a cofactor.

The catalysed reaction is D-ribose 5-phosphate + ATP = 5-phospho-alpha-D-ribose 1-diphosphate + AMP + H(+). It participates in metabolic intermediate biosynthesis; 5-phospho-alpha-D-ribose 1-diphosphate biosynthesis; 5-phospho-alpha-D-ribose 1-diphosphate from D-ribose 5-phosphate (route I): step 1/1. Its activity is regulated as follows. Activated by magnesium and inorganic phosphate. Competitively or non-competitively inhibited by ADP, 2,3-bisphosphoglyceride or GDP. Functionally, catalyzes the synthesis of phosphoribosylpyrophosphate (PRPP) that is essential for nucleotide synthesis. The protein is Ribose-phosphate pyrophosphokinase 2 (prps2) of Xenopus laevis (African clawed frog).